The chain runs to 156 residues: Aspartate carbamoyltransferase regulatory chain (156 aa).

Residues C109, C114, C140, and C143 each contribute to the Zn(2+) site.

It belongs to the PyrI family. As to quaternary structure, contains catalytic and regulatory chains. Zn(2+) serves as cofactor.

Its function is as follows. Involved in allosteric regulation of aspartate carbamoyltransferase. The sequence is that of Aspartate carbamoyltransferase regulatory chain from Methanosarcina acetivorans (strain ATCC 35395 / DSM 2834 / JCM 12185 / C2A).